We begin with the raw amino-acid sequence, 479 residues long: Aspartyl/glutamyl-tRNA(Asn/Gln) amidotransferase subunit B (479 aa).

It belongs to the GatB/GatE family. GatB subfamily. Heterotrimer of A, B and C subunits.

The catalysed reaction is L-glutamyl-tRNA(Gln) + L-glutamine + ATP + H2O = L-glutaminyl-tRNA(Gln) + L-glutamate + ADP + phosphate + H(+). It catalyses the reaction L-aspartyl-tRNA(Asn) + L-glutamine + ATP + H2O = L-asparaginyl-tRNA(Asn) + L-glutamate + ADP + phosphate + 2 H(+). Allows the formation of correctly charged Asn-tRNA(Asn) or Gln-tRNA(Gln) through the transamidation of misacylated Asp-tRNA(Asn) or Glu-tRNA(Gln) in organisms which lack either or both of asparaginyl-tRNA or glutaminyl-tRNA synthetases. The reaction takes place in the presence of glutamine and ATP through an activated phospho-Asp-tRNA(Asn) or phospho-Glu-tRNA(Gln). The sequence is that of Aspartyl/glutamyl-tRNA(Asn/Gln) amidotransferase subunit B from Streptococcus pyogenes serotype M49 (strain NZ131).